Consider the following 379-residue polypeptide: Homoserine O-acetyltransferase (379 aa).

An AB hydrolase-1 domain is found at 52–356 (NVVMVLHALT…IRGHDGFLVE (305 aa)). The Nucleophile role is filled by Ser-157. Arg-227 contributes to the substrate binding site. Residues Asp-320 and His-350 contribute to the active site. Asp-351 provides a ligand contact to substrate.

It belongs to the AB hydrolase superfamily. MetX family. In terms of assembly, homodimer.

The protein resides in the cytoplasm. The catalysed reaction is L-homoserine + acetyl-CoA = O-acetyl-L-homoserine + CoA. The protein operates within amino-acid biosynthesis; L-methionine biosynthesis via de novo pathway; O-acetyl-L-homoserine from L-homoserine: step 1/1. Transfers an acetyl group from acetyl-CoA to L-homoserine, forming acetyl-L-homoserine. This chain is Homoserine O-acetyltransferase, found in Mycobacterium marinum (strain ATCC BAA-535 / M).